A 401-amino-acid chain; its full sequence is Voltage-gated potassium channel subunit beta-1 (401 aa).

Positions 90, 91, 97, and 119 each coordinate NADP(+). The Proton donor/acceptor role is filled by Tyr124. The NADP(+) site is built by Asn192, Ser222, Arg223, Gln248, Trp277, Ser278, Pro279, Leu280, Ala281, Cys282, Lys288, Arg298, Gly357, Ser359, Gln363, Glu366, and Asn367.

This sequence belongs to the shaker potassium channel beta subunit family. In terms of assembly, homotetramer. Interaction with tetrameric potassium channel alpha subunits gives rise to a heterooctamer. Identified in potassium channel complexes containing KCNA1, KCNA2, KCNA4, KCNA5, KCNA6, KCNAB1 and KCNAB2. Part of a complex containing KCNA1, KCNA4 and LGI1; interaction with LGI1 inhibits down-regulation of KCNA1 channel activity. Interacts with the dimer formed by GNB1 and GNG2; this enhances KCNA1 binding. Interacts with SQSTM. As to expression, detected in brain, in hippocampus and striatum (at protein level). Predominantly expressed in brain. No expression found in heart, skeletal muscle or kidney. In the late embryonic and early neonatal brain, highly expressed in hippocampus, cerebral cortex, caudate putamen, colliculus and cerebellum.

It is found in the cytoplasm. Its subcellular location is the membrane. The protein resides in the cell membrane. It catalyses the reaction a primary alcohol + NADP(+) = an aldehyde + NADPH + H(+). The enzyme catalyses a secondary alcohol + NADP(+) = a ketone + NADPH + H(+). Regulatory subunit of the voltage-gated potassium (Kv) Shaker channels composed of pore-forming and potassium-conducting alpha subunits and of regulatory beta subunits. The beta-1/KCNAB1 cytoplasmic subunit mediates closure of delayed rectifier potassium channels by physically obstructing the pore via its N-terminal domain and increases the speed of channel closure for other family members. Promotes the inactivation of KCNA1, KCNA2, KCNA4, KCNA5 and KCNA6 alpha subunit-containing channels. Displays nicotinamide adenine dinucleotide phosphate (NADPH)-dependent aldoketoreductase activity by catalyzing the NADPH-dependent reduction of a variety of endogenous aldehydes and ketones. The binding of NADPH is required for efficient down-regulation of potassium channel activity. Oxidation of the bound NADPH restrains N-terminal domain from blocking the channel, thereby decreasing N-type inactivation of potassium channel activity. In Mus musculus (Mouse), this protein is Voltage-gated potassium channel subunit beta-1.